The chain runs to 6486 residues: Tyrocidine synthase 3 (6486 aa).

Residues 466–1038 (IFELIAEQAS…VAELARFLSR (573 aa)) are domain 1 (asparagine-activating). Carrier domains are found at residues 965–1040 (APQN…SRSE), 2002–2077 (APRN…AAAR), 3040–3115 (APTN…ATSG), 4075–4150 (AAQN…AESA), 5119–5194 (APRS…EETA), and 6162–6237 (APRN…THKR). Ser1000, Ser2037, Ser3075, Ser4110, Ser5154, and Ser6197 each carry O-(pantetheine 4'-phosphoryl)serine. Positions 1521–2070 (YEEYALTYRE…FESPTIAGLA (550 aa)) are domain 2 (glutamine-activating). The tract at residues 2536–3113 (NKTLQALFEE…IKALAQYVAT (578 aa)) is domain 3 (tyrosine-activating). The domain 4 (valine-activating) stretch occupies residues 3590 to 4149 (EHAAVVMDGQ…HELAAHIAES (560 aa)). Positions 4606–5203 (YPTDKTFQKL…AKGNVFSIEP (598 aa)) are domain 5 (ornithine-activating). Residues 5658 to 6245 (LHQLFEEQVD…KRFESRYGTA (588 aa)) form a domain 6 (leucine-activating) region.

Belongs to the ATP-dependent AMP-binding enzyme family. In terms of assembly, large multienzyme complex of TycA, TycB and TycC. Requires pantetheine 4'-phosphate as cofactor.

The protein operates within antibiotic biosynthesis; tyrocidine biosynthesis. Incorporates six amino acids (for tyrocidine A, Asn, Gln, Tyr, Val, Orn, and Leu) in their L-configuration into the peptide product. The protein is Tyrocidine synthase 3 (tycC) of Brevibacillus parabrevis.